The following is an 81-amino-acid chain: Saposin-C (81 aa).

A Saposin B-type domain is found at 1–81; that stretch reads ESVTCKACEY…CSELGLCMSG (81 aa). 3 cysteine pairs are disulfide-bonded: Cys-5–Cys-78, Cys-8–Cys-72, and Cys-36–Cys-47. Asn-22 is a glycosylation site (N-linked (GlcNAc...) asparagine).

Its function is as follows. Saposin-A and saposin-C stimulate the hydrolysis of glucosylceramide by beta-glucosylceramidase (EC 3.2.1.45) and galactosylceramide by beta-galactosylceramidase (EC 3.2.1.46). Saposin-C apparently acts by combining with the enzyme and acidic lipid to form an activated complex, rather than by solubilizing the substrate. The chain is Saposin-C (PSAP) from Cavia porcellus (Guinea pig).